Reading from the N-terminus, the 541-residue chain is Protopine 6-monooxygenase (541 aa).

The helical transmembrane segment at 9-29 (LLLNTWISAYSMAALLALVLV) threads the bilayer. Cys-476 serves as a coordination point for heme.

This sequence belongs to the cytochrome P450 family. Heme is required as a cofactor.

The protein resides in the endoplasmic reticulum membrane. It carries out the reaction protopine + reduced [NADPH--hemoprotein reductase] + O2 = 6-hydroxyprotopine + oxidized [NADPH--hemoprotein reductase] + H2O + H(+). It functions in the pathway alkaloid biosynthesis. Its function is as follows. Catalyzes the conversion of protopine and allocryptopine to dihydrosanguinarine and dihydrochelerythrine, respectively, in the biosynthesis of isoquinoline alkaloid sanguinarine. This chain is Protopine 6-monooxygenase (CYP82N3), found in Papaver somniferum (Opium poppy).